A 268-amino-acid polypeptide reads, in one-letter code: MATYAIGDLQGCHRHFLELLDLIGFNATRDRLWLVGDIVNRGPDSLSLLRTLIELGDAVTMVLGNHDLHLLAVAAGSIRQQHGDTLQPVLEASDSSRLLDWLRHQQLFHHEDEYVLVHAGLLPNWSIEQAQILAQEVETIIRGDRFQTFSRSMYGNVPDHWHDRLQGEDRWRVIINAMTRMRVCSPEGRMNFSCKGELSSVPDGLLPWFEIPWRASKDTTIVFGHWSALGLHLTPNLIALDTGCVWQGCLTSVRLEDRKVFQVPCVRH.

This sequence belongs to the Ap4A hydrolase family.

It catalyses the reaction P(1),P(4)-bis(5'-adenosyl) tetraphosphate + H2O = 2 ADP + 2 H(+). Functionally, hydrolyzes diadenosine 5',5'''-P1,P4-tetraphosphate to yield ADP. In Nitrosomonas europaea (strain ATCC 19718 / CIP 103999 / KCTC 2705 / NBRC 14298), this protein is Bis(5'-nucleosyl)-tetraphosphatase, symmetrical.